The following is a 728-amino-acid chain: Catalase-peroxidase (728 aa).

A cross-link (tryptophyl-tyrosyl-methioninium (Trp-Tyr) (with M-251)) is located at residues 97–225; it reads WHSAGTYRIA…LAAVMMGLIY (129 aa). The active-site Proton acceptor is histidine 98. The tryptophyl-tyrosyl-methioninium (Tyr-Met) (with W-97) cross-link spans 225–251; sequence YVNPEGVDGNPDPLRTAQDIRITFARM. Residue histidine 266 participates in heme b binding.

This sequence belongs to the peroxidase family. Peroxidase/catalase subfamily. Homodimer or homotetramer. Heme b is required as a cofactor. Formation of the three residue Trp-Tyr-Met cross-link is important for the catalase, but not the peroxidase activity of the enzyme.

The catalysed reaction is H2O2 + AH2 = A + 2 H2O. The enzyme catalyses 2 H2O2 = O2 + 2 H2O. Functionally, bifunctional enzyme with both catalase and broad-spectrum peroxidase activity. This Shewanella putrefaciens (strain CN-32 / ATCC BAA-453) protein is Catalase-peroxidase.